A 567-amino-acid chain; its full sequence is Zinc finger protein 512 (567 aa).

Residues 1–32 form a disordered region; sequence MSSRLGAVPATSGPTTFKQQRSTRIVGAKNSR. A compositionally biased stretch (polar residues) spans 12-23; that stretch reads SGPTTFKQQRST. Glycyl lysine isopeptide (Lys-Gly) (interchain with G-Cter in SUMO2) cross-links involve residues lysine 18 and lysine 84. The interval 86–148 is disordered; the sequence is AATSHVEGSG…QARRIRKEPP (63 aa). Basic residues predominate over residues 119-130; that stretch reads KKHKLYGRKQRP. The segment at 197 to 220 adopts a C2H2-type 1 zinc-finger fold; the sequence is FTCHHCGKQLRSLAGMKYHVMANH. Residue lysine 227 forms a Glycyl lysine isopeptide (Lys-Gly) (interchain with G-Cter in SUMO2) linkage. The C2H2-type 2 zinc-finger motif lies at 287–310; it reads LKCHHCGKPYRSKAGLAYHLRSEH. Residue lysine 333 forms a Glycyl lysine isopeptide (Lys-Gly) (interchain with G-Cter in SUMO2) linkage. A C2H2-type 3; atypical zinc finger spans residues 406-430; the sequence is IQCPNQGCEAVYSSVSGLKAHLGSC. The C2H2-type 4 zinc finger occupies 440 to 463; that stretch reads YKCLLCQKEFVSESGVKYHINSVH. The tract at residues 486-567 is disordered; sequence QRQQEEEKRR…PKTNHKRGRK (82 aa). A compositionally biased stretch (basic residues) spans 495–508; that stretch reads RQQHRSRRSLRRRQ. The span at 523 to 532 shows a compositional bias: basic and acidic residues; it reads VGKDQRRNNE. Over residues 556 to 567 the composition is skewed to basic residues; the sequence is KPPKTNHKRGRK.

This sequence belongs to the krueppel C2H2-type zinc-finger protein family.

It is found in the nucleus. Functionally, may be involved in transcriptional regulation. This chain is Zinc finger protein 512 (ZNF512), found in Pongo abelii (Sumatran orangutan).